Consider the following 196-residue polypeptide: Phosphoheptose isomerase (196 aa).

Residues 34 to 192 (MVQCLLGGNK…CEIIDTTLFP (159 aa)) enclose the SIS domain. A substrate-binding site is contributed by 49 to 51 (NGG). 2 residues coordinate Zn(2+): histidine 58 and glutamine 62. Substrate contacts are provided by residues glutamine 62, 91–92 (ND), 117–119 (STS), serine 122, and glutamine 172. 2 residues coordinate Zn(2+): glutamine 172 and histidine 180.

This sequence belongs to the SIS family. GmhA subfamily. As to quaternary structure, homotetramer. Requires Zn(2+) as cofactor.

Its subcellular location is the cytoplasm. The catalysed reaction is 2 D-sedoheptulose 7-phosphate = D-glycero-alpha-D-manno-heptose 7-phosphate + D-glycero-beta-D-manno-heptose 7-phosphate. It participates in carbohydrate biosynthesis; D-glycero-D-manno-heptose 7-phosphate biosynthesis; D-glycero-alpha-D-manno-heptose 7-phosphate and D-glycero-beta-D-manno-heptose 7-phosphate from sedoheptulose 7-phosphate: step 1/1. Catalyzes the isomerization of sedoheptulose 7-phosphate in D-glycero-D-manno-heptose 7-phosphate. This Colwellia psychrerythraea (strain 34H / ATCC BAA-681) (Vibrio psychroerythus) protein is Phosphoheptose isomerase.